The chain runs to 273 residues: MSEDVKKYFTTGEFSKLCRVKKQTLFHYDEIGLFSPEIKKENGYRYYSYHQFETFQVISLFKELGVPLKEIKCLIKGKTPDKILHVLKEKSIEIDKKINELKQLQTILQTKVTLTEQALETDFSSISFEYLNEETFMLSRKTLNLPERKYVAAISELIHEVQQYELDEGYPIGGIFAREQILEKDFYNYSYFYIKVKDGAENINYHVRPKGLYAVGYEIGGNTEEAYRRIIEFIERNGMQIGENAYEEYMLDEMVVDGYENTYAKILLQVKEV.

The HTH merR-type domain occupies 8-77; the sequence is YFTTGEFSKL…LKEIKCLIKG (70 aa). The H-T-H motif DNA-binding region spans 11–30; it reads TGEFSKLCRVKKQTLFHYDE.

Its function is as follows. Activates transcription of the blt gene in response to structurally dissimilar drugs. This Bacillus subtilis (strain 168) protein is Multidrug-efflux transporter 2 regulator (bltR).